We begin with the raw amino-acid sequence, 289 residues long: Pre-mRNA-splicing factor cwf23 (289 aa).

The region spanning 9-74 (DYYELLGINE…QLRKAYDSER (66 aa)) is the J domain. Positions 129-148 (ESANLRRQRENRLREEQEQS) are enriched in basic and acidic residues. 2 disordered regions span residues 129 to 161 (ESANLRRQRENRLREEQEQSKRRKQETPSSKIS) and 269 to 289 (KQKHKQKQKENERKATSTMNA).

This sequence belongs to the DnaJ family. In terms of assembly, belongs to the 40S cdc5-associated complex (or cwf complex), a spliceosome sub-complex reminiscent of a late-stage spliceosome composed of the U2, U5 and U6 snRNAs and at least brr2, cdc5, cwf2/prp3, cwf3/syf1, cwf4/syf3, cwf5/ecm2, spp42/cwf6, cwf7/spf27, cwf8, cwf9, cwf10, cwf11, cwf12, prp45/cwf13, cwf14, cwf15, cwf16, cwf17, cwf18, cwf19, cwf20, cwf21, cwf22, cwf23, cwf24, cwf25, cwf26, cyp7/cwf27, cwf28, cwf29/ist3, lea1, msl1, prp5/cwf1, prp10, prp12/sap130, prp17, prp22, sap61, sap62, sap114, sap145, slu7, smb1, smd1, smd3, smf1, smg1 and syf2.

Its subcellular location is the cytoplasm. The protein resides in the nucleus. Functionally, involved in pre-mRNA splicing. May be involved in endoplasmic reticulum-associated protein degradation (ERAD) and required for growth at low and high temperatures. This Schizosaccharomyces pombe (strain 972 / ATCC 24843) (Fission yeast) protein is Pre-mRNA-splicing factor cwf23 (cwf23).